Reading from the N-terminus, the 180-residue chain is ATP-dependent protease subunit HslV (180 aa).

The active site involves Thr7. Positions 164, 167, and 170 each coordinate Na(+).

This sequence belongs to the peptidase T1B family. HslV subfamily. A double ring-shaped homohexamer of HslV is capped on each side by a ring-shaped HslU homohexamer. The assembly of the HslU/HslV complex is dependent on binding of ATP.

The protein resides in the cytoplasm. The catalysed reaction is ATP-dependent cleavage of peptide bonds with broad specificity.. With respect to regulation, allosterically activated by HslU binding. Protease subunit of a proteasome-like degradation complex believed to be a general protein degrading machinery. This chain is ATP-dependent protease subunit HslV, found in Brevibacillus brevis (strain 47 / JCM 6285 / NBRC 100599).